The sequence spans 144 residues: Large ribosomal subunit protein uL13 (144 aa).

Belongs to the universal ribosomal protein uL13 family. In terms of assembly, part of the 50S ribosomal subunit.

This protein is one of the early assembly proteins of the 50S ribosomal subunit, although it is not seen to bind rRNA by itself. It is important during the early stages of 50S assembly. The sequence is that of Large ribosomal subunit protein uL13 from Mycoplasmopsis pulmonis (strain UAB CTIP) (Mycoplasma pulmonis).